Reading from the N-terminus, the 287-residue chain is Phosphoribosylaminoimidazole-succinocarboxamide synthase (287 aa).

This sequence belongs to the SAICAR synthetase family.

The catalysed reaction is 5-amino-1-(5-phospho-D-ribosyl)imidazole-4-carboxylate + L-aspartate + ATP = (2S)-2-[5-amino-1-(5-phospho-beta-D-ribosyl)imidazole-4-carboxamido]succinate + ADP + phosphate + 2 H(+). It participates in purine metabolism; IMP biosynthesis via de novo pathway; 5-amino-1-(5-phospho-D-ribosyl)imidazole-4-carboxamide from 5-amino-1-(5-phospho-D-ribosyl)imidazole-4-carboxylate: step 1/2. This Neisseria meningitidis serogroup A / serotype 4A (strain DSM 15465 / Z2491) protein is Phosphoribosylaminoimidazole-succinocarboxamide synthase.